A 401-amino-acid polypeptide reads, in one-letter code: F-box protein At1g69090 (401 aa).

The tract at residues Met1–Gln23 is disordered. In terms of domain architecture, F-box spans His27 to Trp74.

This Arabidopsis thaliana (Mouse-ear cress) protein is F-box protein At1g69090.